Reading from the N-terminus, the 65-residue chain is Metallothionein-like protein type 3 (65 aa).

This sequence belongs to the metallothionein superfamily. Type 15 family.

Metallothioneins have a high content of cysteine residues that bind various heavy metals. The polypeptide is Metallothionein-like protein type 3 (Carica papaya (Papaya)).